We begin with the raw amino-acid sequence, 346 residues long: 3 beta-hydroxysteroid dehydrogenase/Delta 5--&gt;4-isomerase (346 aa).

The active-site Proton acceptor is Y147. Residue K151 coordinates NAD(+).

This sequence belongs to the 3-beta-HSD family.

It catalyses the reaction a 3beta-hydroxy-Delta(5)-steroid + NAD(+) = a 3-oxo-Delta(5)-steroid + NADH + H(+). It carries out the reaction a 3-oxo-Delta(5)-steroid = a 3-oxo-Delta(4)-steroid. Its pathway is lipid metabolism; steroid biosynthesis. Its function is as follows. Catalyzes the oxidative conversion of Delta(5)-ene-3-beta-hydroxy steroid, and the oxidative conversion of ketosteroids. The 3-beta-HSD enzymatic system plays a crucial role in the biosynthesis of all classes of hormonal steroids. During viral infection, steroid production contributes to virulence by inhibiting the host inflammatory response. This chain is 3 beta-hydroxysteroid dehydrogenase/Delta 5--&gt;4-isomerase (OPG174), found in Homo sapiens (Human).